Consider the following 838-residue polypeptide: Leucine--tRNA ligase (838 aa).

The 'HIGH' region motif lies at 36–46; sequence PYPSGKIHMGH. The 'KMSKS' region signature appears at 611 to 615; that stretch reads KMSKS. Position 614 (lysine 614) interacts with ATP.

This sequence belongs to the class-I aminoacyl-tRNA synthetase family.

The protein localises to the cytoplasm. It catalyses the reaction tRNA(Leu) + L-leucine + ATP = L-leucyl-tRNA(Leu) + AMP + diphosphate. The sequence is that of Leucine--tRNA ligase from Wolbachia pipientis wMel.